Here is a 918-residue protein sequence, read N- to C-terminus: Melanoma-associated antigen E1 (918 aa).

Disordered stretches follow at residues 1-140, 154-227, and 367-388; these read MSLV…GSKA, EQRH…SNGL, and SQMS…ANNP. Basic residues predominate over residues 8–23; the sequence is SRRRRGGRANARRNNG. Polar residues-rich tracts occupy residues 70–96, 113–126, and 213–227; these read VPPT…SEMP, GLNT…SEGP, and EDPS…SNGL. MAGE domains follow at residues 459–658 and 706–897; these read MEQN…YNEA and LESK…YREA. Residues 704–918 form an interaction with DTNA region; it reads SRLESKARKL…RRPLIVRNLR (215 aa).

Interacts with DTNA. Interacts with TRIM28. As to expression, expressed in cell bodies and dendrites of hippocampal and Purkinje neurons. Also expressed in peripheral nerve, where it localizes to the perineurium and myelin (at protein level). Predominantly expressed in brain and at low levels in the heart, liver, kidney, spleen, testis, lung, thymus, placenta and skeletal muscle.

Its subcellular location is the cytoplasm. The protein localises to the perinuclear region. It localises to the nucleus. It is found in the cell membrane. May enhance ubiquitin ligase activity of RING-type zinc finger-containing E3 ubiquitin-protein ligases. Proposed to act through recruitment and/or stabilization of the Ubl-conjugating enzyme (E2) at the E3:substrate complex. This chain is Melanoma-associated antigen E1 (Magee1), found in Mus musculus (Mouse).